Consider the following 300-residue polypeptide: MTDTPDPAAVSSPAIKAAVLSEALPYIRRFHGKTIVVKYGGNAMTEERLQRSFAHDVVLLKLVGLNPVVVHGGGPQIDDALRRIGKQGTFVQGMRVTDAETMEVVEWVLGGQVQQDIVMMINEVGGKAVGLTGKDGMLIQARKKLMANKENPQEPIDIGFVGDITQVEPAVVKALQDDQFIPVISPIGYGEDGTAYNINADVVAGKMAEVLGAEKLLMMTNTPGVLDKSGKLLRSLSAQTIDELFADGTISGGMLPKIASSLDAAKNGVNSVHIVDGRVPHCLLLEILTDQGVGTMISSH.

Substrate is bound by residues 73–74 (GG), Arg95, and Asn197.

It belongs to the acetylglutamate kinase family. ArgB subfamily.

Its subcellular location is the cytoplasm. It catalyses the reaction N-acetyl-L-glutamate + ATP = N-acetyl-L-glutamyl 5-phosphate + ADP. It participates in amino-acid biosynthesis; L-arginine biosynthesis; N(2)-acetyl-L-ornithine from L-glutamate: step 2/4. Its function is as follows. Catalyzes the ATP-dependent phosphorylation of N-acetyl-L-glutamate. This Bordetella petrii (strain ATCC BAA-461 / DSM 12804 / CCUG 43448) protein is Acetylglutamate kinase.